Reading from the N-terminus, the 449-residue chain is MNNIHAIILAAGKGTRMNSTKPKVLQILSNNTLLEHVLSQVKTLCNKIHIAYGFEGKQVQQKINNPSINWVKQVKQLGTGHAVAQVMPYIEGNSISLILYGDVPLIKRSTLYDLINKTQQSGIALLSVILNNPTGYGRIIRNNKQIQAIVEQKDASNMQLNINEVNTGIMAINSQLLKQYLNEIDSRNTQGELYLTDIIACAAADKKTISSIISKNKFEVLGVNDKVQLAELERLFQKDQAIQFMKQGLGLKDPTRFDCRGTLTFGQNCEIDVNTLIKGKVALGNSTTIEPNCIIKNTIIGNHVSIFPNCVIEDAVIGEGVTIGPFVHIRPQTHIQTHAKIGNFVEIKKSTIGKNTKISHLSYVGDSTIGKNVNIGAGVITCNYDGVNKHQTIIADGAFIGSDSQLIAPIKIGKNAKIGAGSTITKSVSENQLSVSRTKQKNLKYRSKK.

The pyrophosphorylase stretch occupies residues 1-226 (MNNIHAIILA…KFEVLGVNDK (226 aa)). UDP-N-acetyl-alpha-D-glucosamine is bound by residues 9–12 (LAAG), Lys-23, Gln-73, 78–79 (GT), 100–102 (YGD), Gly-137, Glu-151, Asn-166, and Asn-224. Asp-102 lines the Mg(2+) pocket. Asn-224 contributes to the Mg(2+) binding site. The linker stretch occupies residues 227–247 (VQLAELERLFQKDQAIQFMKQ). The N-acetyltransferase stretch occupies residues 248-449 (GLGLKDPTRF…QKNLKYRSKK (202 aa)). Residues Arg-330 and Lys-348 each coordinate UDP-N-acetyl-alpha-D-glucosamine. His-360 serves as the catalytic Proton acceptor. Residues Tyr-363 and Asn-374 each contribute to the UDP-N-acetyl-alpha-D-glucosamine site. Acetyl-CoA contacts are provided by residues Ala-377, 383 to 384 (NY), Ser-402, Ala-420, and Arg-437.

In the N-terminal section; belongs to the N-acetylglucosamine-1-phosphate uridyltransferase family. The protein in the C-terminal section; belongs to the transferase hexapeptide repeat family. Homotrimer. Mg(2+) serves as cofactor.

The protein resides in the cytoplasm. The enzyme catalyses alpha-D-glucosamine 1-phosphate + acetyl-CoA = N-acetyl-alpha-D-glucosamine 1-phosphate + CoA + H(+). It carries out the reaction N-acetyl-alpha-D-glucosamine 1-phosphate + UTP + H(+) = UDP-N-acetyl-alpha-D-glucosamine + diphosphate. It functions in the pathway nucleotide-sugar biosynthesis; UDP-N-acetyl-alpha-D-glucosamine biosynthesis; N-acetyl-alpha-D-glucosamine 1-phosphate from alpha-D-glucosamine 6-phosphate (route II): step 2/2. The protein operates within nucleotide-sugar biosynthesis; UDP-N-acetyl-alpha-D-glucosamine biosynthesis; UDP-N-acetyl-alpha-D-glucosamine from N-acetyl-alpha-D-glucosamine 1-phosphate: step 1/1. It participates in bacterial outer membrane biogenesis; LPS lipid A biosynthesis. In terms of biological role, catalyzes the last two sequential reactions in the de novo biosynthetic pathway for UDP-N-acetylglucosamine (UDP-GlcNAc). The C-terminal domain catalyzes the transfer of acetyl group from acetyl coenzyme A to glucosamine-1-phosphate (GlcN-1-P) to produce N-acetylglucosamine-1-phosphate (GlcNAc-1-P), which is converted into UDP-GlcNAc by the transfer of uridine 5-monophosphate (from uridine 5-triphosphate), a reaction catalyzed by the N-terminal domain. In Vesicomyosocius okutanii subsp. Calyptogena okutanii (strain HA), this protein is Bifunctional protein GlmU.